We begin with the raw amino-acid sequence, 51 residues long: ARSFSSYCVRCRRKTPSFNSKTVTFRNKRRAIRSHCAYCQVKKFRIIGHGG.

Residues Cys-8 to Cys-39 fold into a zinc finger.

As to expression, sperm.

It localises to the nucleus. The chain is Epididymal sperm protein E from Sepia officinalis (Common cuttlefish).